Reading from the N-terminus, the 585-residue chain is Protein FAM151A (585 aa).

A helical transmembrane segment spans residues 14-34 (WVFASITCVSAVAIAAIVLAI).

Belongs to the menorin family.

The protein resides in the membrane. The sequence is that of Protein FAM151A (FAM151A) from Pongo abelii (Sumatran orangutan).